The sequence spans 334 residues: L-lactate dehydrogenase B chain (334 aa).

Alanine 2 is subject to N-acetylalanine. At lysine 7 the chain carries N6-acetyllysine. NAD(+) is bound at residue 31-53 (QVGMACAISILGKSLADELALVD). Serine 44 bears the Phosphoserine mark. Lysine 58 carries the N6-acetyllysine modification. Position 100 (arginine 100) interacts with NAD(+). Residue arginine 107 participates in substrate binding. Position 119 is an N6-acetyllysine (lysine 119). Asparagine 139 is a binding site for NAD(+). Residues asparagine 139 and arginine 170 each coordinate substrate. Histidine 194 (proton acceptor) is an active-site residue. Tyrosine 240 bears the Phosphotyrosine mark. Threonine 249 provides a ligand contact to substrate. Lysine 329 bears the N6-acetyllysine mark.

This sequence belongs to the LDH/MDH superfamily. LDH family. As to quaternary structure, homotetramer. Interacts with PTEN upstream reading frame protein MP31; the interaction leads to inhibition of mitochondrial lactate dehydrogenase activity, preventing conversion of lactate to pyruvate in mitochondria. Predominantly expressed in aerobic tissues such as cardiac muscle.

It localises to the cytoplasm. The protein localises to the mitochondrion inner membrane. It catalyses the reaction (S)-lactate + NAD(+) = pyruvate + NADH + H(+). It participates in fermentation; pyruvate fermentation to lactate; (S)-lactate from pyruvate: step 1/1. Its function is as follows. Interconverts simultaneously and stereospecifically pyruvate and lactate with concomitant interconversion of NADH and NAD(+). The chain is L-lactate dehydrogenase B chain (LDHB) from Homo sapiens (Human).